Consider the following 507-residue polypeptide: Peroxisomal membrane protein PEX14 (507 aa).

Polar residues-rich tracts occupy residues 1–10 (MATHQQTQPP) and 32–48 (EVQQ…SVFK). Positions 1-52 (MATHQQTQPPSDFPALADENSQIPEATKPANEVQQATIAQDPPTSVFKNSEP) are disordered. Topologically, residues 1 to 152 (MATHQQTQPP…QAAFLSRFRW (152 aa)) are peroxisomal. Involved in interaction with PEX5 regions lie at residues 58 to 65 (IQNAIKFL) and 78 to 97 (RRSF…EAFR). The chain crosses the membrane as a helical span at residues 153 to 173 (YHAILAVGVLAASGAGTAVFI). At 174–507 (KRSLIPRFKS…EQQHISQEGN (334 aa)) the chain is on the cytoplasmic side. The segment covering 288–302 (VTTARKPYTNGSNVD) has biased composition (polar residues). Disordered stretches follow at residues 288-329 (VTTA…PKSY), 344-394 (NIRE…NPRS), 409-435 (ANQN…QPPP), and 448-507 (PKPQ…QEGN). Residues 308–322 (ARSASPPAAPADSSA) are compositionally biased toward low complexity. Residues 378-394 (QDESSNGQWWQQKNPRS) are compositionally biased toward polar residues.

The protein belongs to the peroxin-14 family. In terms of assembly, interacts with PEX13; forming the PEX13-PEX14 docking complex. Interacts with PEX5 (via WxxxF/Y motifs). Expressed in flowers, siliques, leaves and roots.

The protein resides in the peroxisome membrane. Component of the PEX13-PEX14 docking complex, a translocon channel that specifically mediates the import of peroxisomal cargo proteins bound to PEX5 receptor. The PEX13-PEX14 docking complex forms a large import pore which can be opened to a diameter of about 9 nm. Mechanistically, PEX5 receptor along with cargo proteins associates with the PEX14 subunit of the PEX13-PEX14 docking complex in the cytosol, leading to the insertion of the receptor into the organelle membrane with the concomitant translocation of the cargo into the peroxisome matrix. In Arabidopsis thaliana (Mouse-ear cress), this protein is Peroxisomal membrane protein PEX14.